The following is a 381-amino-acid chain: Succinyl-diaminopimelate desuccinylase (381 aa).

Residue histidine 68 coordinates Zn(2+). Aspartate 70 is an active-site residue. Aspartate 101 lines the Zn(2+) pocket. The active-site Proton acceptor is glutamate 135. Glutamate 136, glutamate 164, and histidine 350 together coordinate Zn(2+).

This sequence belongs to the peptidase M20A family. DapE subfamily. Homodimer. Zn(2+) serves as cofactor. Co(2+) is required as a cofactor.

It catalyses the reaction N-succinyl-(2S,6S)-2,6-diaminopimelate + H2O = (2S,6S)-2,6-diaminopimelate + succinate. It functions in the pathway amino-acid biosynthesis; L-lysine biosynthesis via DAP pathway; LL-2,6-diaminopimelate from (S)-tetrahydrodipicolinate (succinylase route): step 3/3. Its function is as follows. Catalyzes the hydrolysis of N-succinyl-L,L-diaminopimelic acid (SDAP), forming succinate and LL-2,6-diaminopimelate (DAP), an intermediate involved in the bacterial biosynthesis of lysine and meso-diaminopimelic acid, an essential component of bacterial cell walls. This Neisseria meningitidis serogroup B (strain ATCC BAA-335 / MC58) protein is Succinyl-diaminopimelate desuccinylase (dapE).